Reading from the N-terminus, the 357-residue chain is GDSL esterase/lipase At5g45950 (357 aa).

Residues 1–23 (MLLVAFVTLLVAVALQPLPSVLS) form the signal peptide. The N-linked (GlcNAc...) asparagine glycan is linked to Asn37. Residue Ser47 is the Nucleophile of the active site. N-linked (GlcNAc...) asparagine glycosylation is present at Asn132. Active-site residues include Asp331 and His334.

The protein belongs to the 'GDSL' lipolytic enzyme family.

It is found in the secreted. This is GDSL esterase/lipase At5g45950 from Arabidopsis thaliana (Mouse-ear cress).